A 382-amino-acid polypeptide reads, in one-letter code: Saccharopine dehydrogenase [NAD(+), L-lysine-forming] (382 aa).

2 residues coordinate L-saccharopine: Arg-20 and Lys-79. Residue Lys-79 is the Proton acceptor of the active site. His-98 functions as the Proton donor in the catalytic mechanism. Gln-103 serves as a coordination point for L-saccharopine. Position 132 (Arg-132) interacts with NAD(+). Residues Arg-133 and Phe-137 each contribute to the L-saccharopine site. NAD(+) is bound by residues 215 to 216 (GR), Asp-239, Thr-243, Tyr-263, and Val-290. Residues Cys-217 and Cys-261 are joined by a disulfide bond. 291–293 (SAD) contributes to the L-saccharopine binding site. 330–333 (IDHL) provides a ligand contact to NAD(+).

The protein belongs to the AlaDH/PNT family. As to quaternary structure, monomer.

The catalysed reaction is L-saccharopine + NAD(+) + H2O = L-lysine + 2-oxoglutarate + NADH + H(+). It participates in amino-acid biosynthesis; L-lysine biosynthesis via AAA pathway; L-lysine from L-alpha-aminoadipate (fungal route): step 3/3. Catalyzes the NAD(+)-dependent cleavage of saccharopine to L-lysine and 2-oxoglutarate, the final step in the alpha-aminoadipate (AAA) pathway for lysin biosynthesis. The sequence is that of Saccharopine dehydrogenase [NAD(+), L-lysine-forming] from Candida albicans (strain SC5314 / ATCC MYA-2876) (Yeast).